The chain runs to 261 residues: uncharacterized protein (261 aa).

Belongs to the BtpA family.

This is an uncharacterized protein from Thermococcus kodakarensis (strain ATCC BAA-918 / JCM 12380 / KOD1) (Pyrococcus kodakaraensis (strain KOD1)).